A 203-amino-acid polypeptide reads, in one-letter code: Histone deacetylase HDT4 (203 aa).

The segment at 2 to 5 is required to repress transcription; the sequence is EFWG. The tract at residues 121-203 is disordered; sequence AALPQNEINP…PFPCGPSCKK (83 aa). Residues 129–157 show a composition bias toward acidic residues; sequence NPEEDDESDSDEMGLDEDDDSSDEEDVEA. The segment covering 180-193 has biased composition (basic residues); it reads GGKKNKSSGGKKRC.

This sequence belongs to the histone deacetylase HD2 family. Confined to stems and flowers with young siliques.

It is found in the nucleus. The protein resides in the nucleolus. In terms of biological role, probably mediates the deacetylation of lysine residues lysine residues on the N-terminal part of the core histones (H2A, H2B, H3 and H4). Histone deacetylation gives a tag for epigenetic repression and plays an important role in transcriptional regulation, cell cycle progression and developmental events. The polypeptide is Histone deacetylase HDT4 (HDT4) (Arabidopsis thaliana (Mouse-ear cress)).